The following is a 546-amino-acid chain: Immunoglobulin-like domain-containing receptor 1 (546 aa).

The signal sequence occupies residues 1 to 23; it reads MAWPKLPAPWLLLCTWLPAGCLS. Positions 24-162 constitute an Ig-like V-type domain; the sequence is LLVTVQHTER…TSGDPDKEVK (139 aa). Over 24–167 the chain is Extracellular; sequence LLVTVQHTER…DKEVKLIVLH (144 aa). Cys-45 and Cys-145 are disulfide-bonded. Residues 168 to 188 form a helical membrane-spanning segment; sequence WLTVIFIILGALLLLLLIGVC. Topologically, residues 189–546 are cytoplasmic; sequence WCQCCPQYCC…SSHSGRSVVI (358 aa). Positions 399–546 are disordered; sequence WSGRHRSSRL…SSHSGRSVVI (148 aa). Positions 442 to 457 are enriched in basic and acidic residues; sequence RCQERPRRPSPRESTQ. A compositionally biased stretch (basic residues) spans 458–467; it reads RHGRRRRHRS. Phosphoserine occurs at positions 499 and 501. Residues 527–539 show a composition bias toward basic and acidic residues; that stretch reads GSVERRSEKDSSH.

Belongs to the immunoglobulin superfamily. LISCH7 family. In terms of assembly, homooligomer. Interacts with MARVELD2 and OCLN; the interaction is required to recruit MARVELD2 to tricellular contacts. Interacts (via C-terminus) with TRA2A, TRA2B and SRSF1. Interacts with PLSCR1.

Its subcellular location is the cell membrane. It is found in the cell junction. The protein localises to the tight junction. It localises to the nucleus. The protein resides in the cytoplasm. Its function is as follows. Maintains epithelial barrier function by recruiting MARVELD2/tricellulin to tricellular tight junctions (tTJs). Crucial for normal hearing by maintaining the structural and functional integrity of tTJs, which are critical for the survival of auditory neurosensory HCs. Mediates fatty acids and lipoproteins-stimulated CCK/cholecystokinin secretion in the small intestine. In the inner ear, may regulate alternative pre-mRNA splicing via binding to TRA2A, TRA2B and SRSF1. The sequence is that of Immunoglobulin-like domain-containing receptor 1 (ILDR1) from Pongo abelii (Sumatran orangutan).